Reading from the N-terminus, the 473-residue chain is H(+)/Cl(-) exchange transporter ClcA (473 aa).

At 1–32 the chain is on the cytoplasmic side; that stretch reads MKTDNSTFLAQQIVRLRRRDQIRRLMQRDKTP. A helical membrane pass occupies residues 33–69; it reads LAILFMAAVVGTLTGLVGVAFEKAVSWVQNMRIGALV. At 70–76 the chain is on the periplasmic side; it reads QVADHAF. The chain crosses the membrane as a helical span at residues 77–100; it reads LLWPLAFILSALLAMVGYFLVRKF. The Selectivity filter part_1 motif lies at 106–110; sequence GSGIP. S107 is a chloride binding site. The segment at residues 109–116 is an intramembrane region (helical); the sequence is IPEIEGAL. The Cytoplasmic portion of the chain corresponds to 117-123; it reads EELRPVR. 2 helical membrane-spanning segments follow: residues 124-141 and 148-166; these read WWRV…TLGA and EGPT…LDVF. The Selectivity filter part_2 signature appears at 146-150; it reads GREGP. At 167 to 176 the chain is on the cytoplasmic side; it reads RMRSAEARHT. Intramembrane regions (helical) lie at residues 177-189 and 193-201; these read LLAT…LSAA and PLAGILFII. Residues 202–214 are Cytoplasmic-facing; it reads EEMRPQFRYNLIS. A helical membrane pass occupies residues 215-232; it reads IKAVFTGVIMSSIVFRIF. Topologically, residues 233-252 are periplasmic; it reads NGEAPIIEVGKLSDAPVNTL. A helical membrane pass occupies residues 253 to 281; the sequence is WLYLILGIIFGCVGPVFNSLVLRTQDMFQ. Residues 282 to 287 lie on the Cytoplasmic side of the membrane; sequence RFHGGE. The helical transmembrane segment at 288 to 309 threads the bilayer; sequence IKKWVLMGGAIGGLCGILGLIE. The Periplasmic segment spans residues 310 to 329; it reads PEAAGGGFNLIPIAAAGNFS. The next 2 membrane-spanning stretches (helical) occupy residues 330 to 349 and 355 to 376; these read VGLL…LCFS and GIFA…MAAA. The Selectivity filter part_3 signature appears at 355–359; it reads GIFAP. Chloride-binding residues include I356 and F357. Over 377–386 the chain is Periplasmic; it reads VLFPQYHLEA. Residues 387 to 401 constitute an intramembrane region (helical); sequence GTFAIAGMGALMAAS. The note=Loop between two helices intramembrane region spans 402–404; the sequence is VRA. The segment at residues 405 to 416 is an intramembrane region (helical); sequence PLTGIVLVLEMT. Positions 417-421 form an intramembrane region, note=Loop between two helices; that stretch reads DNYQL. Residues 422–438 form a helical membrane-spanning segment; sequence ILPMIITCLGATLLAQF. At 439 to 473 the chain is on the cytoplasmic side; the sequence is LGGKPLYSTILARTLAKQDAEQAAKNQNAPAGENT. Chloride is bound at residue Y445.

This sequence belongs to the chloride channel (TC 2.A.49) family. ClcA subfamily. As to quaternary structure, homodimer.

The protein localises to the cell inner membrane. It carries out the reaction 2 chloride(in) + H(+)(out) = 2 chloride(out) + H(+)(in). Proton-coupled chloride transporter. Functions as antiport system and exchanges two chloride ions for 1 proton. Probably acts as an electrical shunt for an outwardly-directed proton pump that is linked to amino acid decarboxylation, as part of the extreme acid resistance (XAR) response. The polypeptide is H(+)/Cl(-) exchange transporter ClcA (Salmonella schwarzengrund (strain CVM19633)).